Consider the following 274-residue polypeptide: Syntaxin-12 (274 aa).

Disordered regions lie at residues 1–20 (MSYGPLDMYRNPGPSGPQPR) and 128–147 (EKESIARARAGSRLSAEDRQ). S2 bears the N-acetylserine mark. At 2–250 (SYGPLDMYRN…AYYQKKSRKK (249 aa)) the chain is on the cytoplasmic side. Residues 33-130 (IQRISQATAQ…QRKVSEKEKE (98 aa)) adopt a coiled-coil conformation. A phosphoserine mark is found at S139, S142, S218, and S225. Residues 178-240 (LELIKERETA…ERATDQLQRA (63 aa)) form the t-SNARE coiled-coil homology domain. A helical; Anchor for type IV membrane protein transmembrane segment spans residues 251 to 271 (MCILVLVLSVIVTVLVVVIWV). Residues 272 to 274 (ASK) are Vesicular-facing.

This sequence belongs to the syntaxin family. As to quaternary structure, associates with the BLOC-1 complex. Interacts with BLOC1S6. Interacts with NAPA and SNAP23. Identified in a complex containing STX6, STX12, VAMP4 and VTI1A. Interacts with GRIPAP1. Forms a complex with GRIP1, GRIA2 and NSG1; controls the intracellular fate of AMPAR and the endosomal sorting of the GRIA2 subunit toward recycling and membrane targeting. Interacts with NSG1. Interacts with TPC1. Interacts (via N-terminus) with VPS13B.

Its subcellular location is the endosome membrane. It localises to the golgi apparatus membrane. The protein localises to the endomembrane system. The protein resides in the early endosome membrane. It is found in the recycling endosome membrane. Functionally, SNARE promoting fusion of transport vesicles with target membranes. Together with SNARE STX6, promotes movement of vesicles from endosomes to the cell membrane, and may therefore function in the endocytic recycling pathway. Through complex formation with GRIP1, GRIA2 and NSG1 controls the intracellular fate of AMPAR and the endosomal sorting of the GRIA2 subunit toward recycling and membrane targeting. This is Syntaxin-12 (Stx12) from Mus musculus (Mouse).